Reading from the N-terminus, the 254-residue chain is 3-deoxy-manno-octulosonate cytidylyltransferase (254 aa).

Belongs to the KdsB family.

The protein localises to the cytoplasm. It carries out the reaction 3-deoxy-alpha-D-manno-oct-2-ulosonate + CTP = CMP-3-deoxy-beta-D-manno-octulosonate + diphosphate. Its pathway is nucleotide-sugar biosynthesis; CMP-3-deoxy-D-manno-octulosonate biosynthesis; CMP-3-deoxy-D-manno-octulosonate from 3-deoxy-D-manno-octulosonate and CTP: step 1/1. It functions in the pathway bacterial outer membrane biogenesis; lipopolysaccharide biosynthesis. In terms of biological role, activates KDO (a required 8-carbon sugar) for incorporation into bacterial lipopolysaccharide in Gram-negative bacteria. The polypeptide is 3-deoxy-manno-octulosonate cytidylyltransferase (Chlamydia pneumoniae (Chlamydophila pneumoniae)).